The primary structure comprises 533 residues: UDP-glucuronosyltransferase 1-2 (533 aa).

The first 27 residues, 1-27 (MDTGLCVPLRGISGLLLLLCALPWAEG), serve as a signal peptide directing secretion. 3 N-linked (GlcNAc...) asparagine glycosylation sites follow: Asn141, Asn295, and Asn433. The helical transmembrane segment at 491-511 (VIGFLLAIVLTVVFIVFKCCA) threads the bilayer.

This sequence belongs to the UDP-glycosyltransferase family. As to expression, expressed in kidney.

The protein localises to the microsome. It localises to the endoplasmic reticulum membrane. The catalysed reaction is glucuronate acceptor + UDP-alpha-D-glucuronate = acceptor beta-D-glucuronoside + UDP + H(+). UDPGT is of major importance in the conjugation and subsequent elimination of potentially toxic xenobiotics and endogenous compounds. The chain is UDP-glucuronosyltransferase 1-2 (Ugt1a2) from Mus musculus (Mouse).